The sequence spans 625 residues: Threonine--tRNA ligase (625 aa).

The interval 1–147 (MRILLIHSDY…TIVPGEAKKE (147 aa)) is editing domain. Residues 206-505 (PHVKIMLEQE…MKKGKKPMYP (300 aa)) are catalytic. 3 residues coordinate Zn(2+): Cys-298, His-350, and His-474.

It belongs to the class-II aminoacyl-tRNA synthetase family. As to quaternary structure, homodimer. Zn(2+) serves as cofactor.

It localises to the cytoplasm. It carries out the reaction tRNA(Thr) + L-threonine + ATP = L-threonyl-tRNA(Thr) + AMP + diphosphate + H(+). In terms of biological role, catalyzes the attachment of threonine to tRNA(Thr) in a two-step reaction: L-threonine is first activated by ATP to form Thr-AMP and then transferred to the acceptor end of tRNA(Thr). Also edits incorrectly charged L-seryl-tRNA(Thr). The polypeptide is Threonine--tRNA ligase (Thermococcus sibiricus (strain DSM 12597 / MM 739)).